The following is a 473-amino-acid chain: C3a anaphylatoxin chemotactic receptor (473 aa).

Over 1 to 23 the chain is Extracellular; it reads MESFTADTNSTDLHSRPLFKPQD. N-linked (GlcNAc...) asparagine glycosylation occurs at N9. A helical transmembrane segment spans residues 24–46; that stretch reads IASMVILSLTCLLGLPGNGLVLW. Residues 47–57 lie on the Cytoplasmic side of the membrane; it reads VAGVKMKRTVN. A helical transmembrane segment spans residues 58 to 80; it reads TVWFLHLTLADFLCCLSLPFSVA. The Extracellular segment spans residues 81-96; it reads HLILRGHWPYGLFLCK. C95 and C172 are disulfide-bonded. The chain crosses the membrane as a helical span at residues 97–118; sequence LIPSVIILNMFASVFLLTAISL. The Cytoplasmic segment spans residues 119-139; sequence DRCLMVHKPIWCQNHRSVRTA. The chain crosses the membrane as a helical span at residues 140–160; that stretch reads FAVCGCVWVVTFVMCIPVFVY. Residues 161 to 329 are Extracellular-facing; sequence RDLLVVDDYS…TPQVAITISR (169 aa). Y174 and Y184 each carry sulfotyrosine. An N-linked (GlcNAc...) asparagine glycan is attached at N201. The segment at 233–252 is disordered; the sequence is FHTSPEDPFSQDSASQQPHY. Y308 carries the post-translational modification Sulfotyrosine. Residues 330 to 349 traverse the membrane as a helical segment; the sequence is LVVGFLVPFFIMITCYSLIV. Over 350–366 the chain is Cytoplasmic; sequence FRMRKTNLTKSRNKTLR. The chain crosses the membrane as a helical span at residues 367–389; sequence VAVAVVTVFFVCWIPYHIVGILL. Topologically, residues 390–406 are extracellular; that stretch reads VITDQESALREVVLPWD. Residues 407-427 form a helical membrane-spanning segment; it reads HMSIALASANSCFNPFLYALL. Topologically, residues 428–473 are cytoplasmic; that stretch reads GKDFRKKARQSVKGILEAAFSEELTHSTSCTQDKAPSKRNHMSTDV. Residue S448 is modified to Phosphoserine. T452 carries the post-translational modification Phosphothreonine.

Belongs to the G-protein coupled receptor 1 family. In terms of assembly, interacts with VGF-derived peptide TLQP-21.

The protein localises to the cell membrane. Receptor for the chemotactic and inflammatory peptide anaphylatoxin C3a. This receptor stimulates chemotaxis, granule enzyme release and superoxide anion production. The polypeptide is C3a anaphylatoxin chemotactic receptor (C3ar1) (Rattus norvegicus (Rat)).